The primary structure comprises 562 residues: NAD-dependent malic enzyme (562 aa).

Y101 functions as the Proton donor in the catalytic mechanism. Position 154 (R154) interacts with NAD(+). The Proton acceptor role is filled by K172. 3 residues coordinate a divalent metal cation: E243, D244, and D267. Residues D267 and N415 each coordinate NAD(+).

The protein belongs to the malic enzymes family. Homotetramer. Requires Mg(2+) as cofactor. Mn(2+) is required as a cofactor.

The enzyme catalyses (S)-malate + NAD(+) = pyruvate + CO2 + NADH. It carries out the reaction oxaloacetate + H(+) = pyruvate + CO2. The sequence is that of NAD-dependent malic enzyme from Vibrio campbellii (strain ATCC BAA-1116).